The chain runs to 124 residues: V-type proton ATPase subunit F (124 aa).

It belongs to the V-ATPase F subunit family. In terms of assembly, V-ATPase is a heteromultimeric enzyme composed of a peripheral catalytic V1 complex (components A to H) attached to an integral membrane V0 proton pore complex (components: a, c, c', c'', d, e, f and VOA1).

Its subcellular location is the vacuole membrane. Subunit of the V1 complex of vacuolar(H+)-ATPase (V-ATPase), a multisubunit enzyme composed of a peripheral complex (V1) that hydrolyzes ATP and a membrane integral complex (V0) that translocates protons. V-ATPase is responsible for acidifying and maintaining the pH of intracellular compartments. The chain is V-type proton ATPase subunit F (vma7) from Neosartorya fischeri (strain ATCC 1020 / DSM 3700 / CBS 544.65 / FGSC A1164 / JCM 1740 / NRRL 181 / WB 181) (Aspergillus fischerianus).